We begin with the raw amino-acid sequence, 166 residues long: Large ribosomal subunit protein uL10 (166 aa).

Belongs to the universal ribosomal protein uL10 family. In terms of assembly, part of the ribosomal stalk of the 50S ribosomal subunit. The N-terminus interacts with L11 and the large rRNA to form the base of the stalk. The C-terminus forms an elongated spine to which L12 dimers bind in a sequential fashion forming a multimeric L10(L12)X complex.

Its function is as follows. Forms part of the ribosomal stalk, playing a central role in the interaction of the ribosome with GTP-bound translation factors. The sequence is that of Large ribosomal subunit protein uL10 from Pelagibacter ubique (strain HTCC1062).